The chain runs to 302 residues: Large ribosomal subunit protein uL3c (302 aa).

A chloroplast-targeting transit peptide spans 1–36 (MFQSSRLVALGLCAALVLVGGSIILSGLSPNLSSPM). Positions 208-239 (FQGSIRRWGMKRGPMSHGSKSHRQHGSIGCSA) are disordered.

The protein belongs to the universal ribosomal protein uL3 family. In terms of assembly, part of the 50S ribosomal subunit.

The protein localises to the plastid. The protein resides in the chloroplast. Its function is as follows. One of the primary rRNA binding proteins, it binds directly near the 3'-end of the 23S rRNA, where it nucleates assembly of the 50S subunit. This chain is Large ribosomal subunit protein uL3c (RPL3), found in Bigelowiella natans (Pedinomonas minutissima).